Consider the following 41-residue polypeptide: Large ribosomal subunit protein bL36 (41 aa).

This sequence belongs to the bacterial ribosomal protein bL36 family.

The chain is Large ribosomal subunit protein bL36 from Bartonella bacilliformis (strain ATCC 35685 / KC583 / Herrer 020/F12,63).